Consider the following 335-residue polypeptide: Fructose-1,6-bisphosphatase class 1 (335 aa).

Mg(2+) is bound by residues Glu92, Asp115, Leu117, and Asp118. Residues 118-121, Asn211, Tyr244, 262-264, and Lys274 contribute to the substrate site; these read DGSS and YLY. Glu280 provides a ligand contact to Mg(2+).

It belongs to the FBPase class 1 family. Homotetramer. Requires Mg(2+) as cofactor.

The protein resides in the cytoplasm. It catalyses the reaction beta-D-fructose 1,6-bisphosphate + H2O = beta-D-fructose 6-phosphate + phosphate. The protein operates within carbohydrate biosynthesis; gluconeogenesis. The polypeptide is Fructose-1,6-bisphosphatase class 1 (Teredinibacter turnerae (strain ATCC 39867 / T7901)).